The chain runs to 214 residues: MSDYGEWAVIVPFRSLDVAKSRLAVSCRRDLALAFLQDTLAALTLSNHISSVIVVSRNAALSETIGTPVIKDQGSGIDDAVEIGHRWLREHGHDGHYSVVMPDLPALRTGDIDNFLSAASRFPRAFVADSAGTGTTCLTTQQAAILSAFGRNSAQRHTRMGYKQIPLGLPSLRLDVDTIDDLERAARMGVGRHTQRLLISNNELHSLRFPCAPG.

Residues Thr-135, Gly-150, and Ser-153 each contribute to the phosphoenolpyruvate site.

The protein belongs to the CofC family.

The catalysed reaction is phosphoenolpyruvate + GTP + H(+) = enolpyruvoyl-2-diphospho-5'-guanosine + diphosphate. Its pathway is cofactor biosynthesis; coenzyme F420 biosynthesis. In terms of biological role, guanylyltransferase that catalyzes the activation of phosphoenolpyruvate (PEP) as enolpyruvoyl-2-diphospho-5'-guanosine, via the condensation of PEP with GTP. It is involved in the biosynthesis of coenzyme F420, a hydride carrier cofactor. This Rhodococcus jostii (strain RHA1) protein is Phosphoenolpyruvate guanylyltransferase 2.